Here is a 294-residue protein sequence, read N- to C-terminus: sn-glycerol-3-phosphate transport system permease protein UgpA (294 aa).

The Cytoplasmic segment spans residues 1 to 11 (MSPSRPGFSCS). Residues 12–32 (WLPYLLVLPQLAITAIFFLWP) form a helical membrane-spanning segment. Over 33–80 (AGEALWYSVQTLDPFGLSSEFVGLSNFIQLFQDEYYLASFYTTLIFSA) the chain is Periplasmic. Residues 72-284 (FYTTLIFSAL…LLVIGLTVIQ (213 aa)) form the ABC transmembrane type-1 domain. A helical membrane pass occupies residues 81 to 101 (LVAGIGLNVSLFLAAMVDYVL). Residues 102–109 (RGSRLYQT) are Cytoplasmic-facing. Residues 110–130 (LLILPYAVAPAVAAVLWIFLF) traverse the membrane as a helical segment. The Periplasmic portion of the chain corresponds to 131-157 (DPGLGLITHALAKLGYSWNHAQNSGQA). A helical membrane pass occupies residues 158–178 (MFLVVLASVWKQISYNFLFFL). Residues 179–207 (AALQSIPKSLVEAAAIDGAGPVRRFFNLV) lie on the Cytoplasmic side of the membrane. Residues 208-228 (LPLISPVSFFLLVVNLVYAFF) form a helical membrane-spanning segment. Residues 229–262 (DTFPVIDAATGGGPVQATTTLIYKIYREGFAGLD) lie on the Periplasmic side of the membrane. The helical transmembrane segment at 263 to 283 (LSSSAAQSVILMLLVIGLTVI) threads the bilayer. Over 284 to 294 (QFRFVERKVRY) the chain is Cytoplasmic.

It belongs to the binding-protein-dependent transport system permease family. UgpAE subfamily. As to quaternary structure, the complex is composed of two ATP-binding proteins (UgpC), two transmembrane proteins (UgpA and UgpE) and a solute-binding protein (UgpB).

Its subcellular location is the cell inner membrane. Functionally, part of the ABC transporter complex UgpBAEC involved in sn-glycerol-3-phosphate (G3P) import. Probably responsible for the translocation of the substrate across the membrane. This is sn-glycerol-3-phosphate transport system permease protein UgpA (ugpA) from Yersinia pseudotuberculosis serotype I (strain IP32953).